Reading from the N-terminus, the 338-residue chain is Phenylalanine--tRNA ligase alpha subunit (338 aa).

Glutamate 252 is a Mg(2+) binding site.

The protein belongs to the class-II aminoacyl-tRNA synthetase family. Phe-tRNA synthetase alpha subunit type 1 subfamily. As to quaternary structure, tetramer of two alpha and two beta subunits. Requires Mg(2+) as cofactor.

It localises to the cytoplasm. The enzyme catalyses tRNA(Phe) + L-phenylalanine + ATP = L-phenylalanyl-tRNA(Phe) + AMP + diphosphate + H(+). The chain is Phenylalanine--tRNA ligase alpha subunit from Mycoplasmoides gallisepticum (strain R(low / passage 15 / clone 2)) (Mycoplasma gallisepticum).